Consider the following 89-residue polypeptide: Small ribosomal subunit protein uS14 (89 aa).

This sequence belongs to the universal ribosomal protein uS14 family. Part of the 30S ribosomal subunit. Contacts proteins S3 and S10.

Binds 16S rRNA, required for the assembly of 30S particles and may also be responsible for determining the conformation of the 16S rRNA at the A site. The protein is Small ribosomal subunit protein uS14 of Shouchella clausii (strain KSM-K16) (Alkalihalobacillus clausii).